Reading from the N-terminus, the 126-residue chain is Glycine cleavage system H protein (126 aa).

Positions threonine 21–lysine 103 constitute a Lipoyl-binding domain. N6-lipoyllysine is present on lysine 62.

The protein belongs to the GcvH family. As to quaternary structure, the glycine cleavage system is composed of four proteins: P, T, L and H. It depends on (R)-lipoate as a cofactor.

Its function is as follows. The glycine cleavage system catalyzes the degradation of glycine. The H protein shuttles the methylamine group of glycine from the P protein to the T protein. This Aliivibrio fischeri (strain MJ11) (Vibrio fischeri) protein is Glycine cleavage system H protein.